Consider the following 239-residue polypeptide: Pyridoxine 5'-phosphate synthase (239 aa).

A 3-amino-2-oxopropyl phosphate-binding site is contributed by Asn-7. 9–10 (DH) serves as a coordination point for 1-deoxy-D-xylulose 5-phosphate. Residue Arg-18 participates in 3-amino-2-oxopropyl phosphate binding. Catalysis depends on His-43, which acts as the Proton acceptor. 1-deoxy-D-xylulose 5-phosphate-binding residues include Arg-45 and His-50. The active-site Proton acceptor is Glu-70. Thr-100 serves as a coordination point for 1-deoxy-D-xylulose 5-phosphate. The active-site Proton donor is His-192. Residues Gly-193 and 214–215 (GH) contribute to the 3-amino-2-oxopropyl phosphate site.

It belongs to the PNP synthase family. Homooctamer; tetramer of dimers.

The protein localises to the cytoplasm. It carries out the reaction 3-amino-2-oxopropyl phosphate + 1-deoxy-D-xylulose 5-phosphate = pyridoxine 5'-phosphate + phosphate + 2 H2O + H(+). The protein operates within cofactor biosynthesis; pyridoxine 5'-phosphate biosynthesis; pyridoxine 5'-phosphate from D-erythrose 4-phosphate: step 5/5. In terms of biological role, catalyzes the complicated ring closure reaction between the two acyclic compounds 1-deoxy-D-xylulose-5-phosphate (DXP) and 3-amino-2-oxopropyl phosphate (1-amino-acetone-3-phosphate or AAP) to form pyridoxine 5'-phosphate (PNP) and inorganic phosphate. In Pelagibacter ubique (strain HTCC1062), this protein is Pyridoxine 5'-phosphate synthase.